The primary structure comprises 1397 residues: DNA-directed RNA polymerase subunit beta' (1397 aa).

Zn(2+) contacts are provided by C75, C77, C90, and C93. Mg(2+) contacts are provided by D465, D467, and D469. C819, C893, C900, and C903 together coordinate Zn(2+).

This sequence belongs to the RNA polymerase beta' chain family. The RNAP catalytic core consists of 2 alpha, 1 beta, 1 beta' and 1 omega subunit. When a sigma factor is associated with the core the holoenzyme is formed, which can initiate transcription. The cofactor is Mg(2+). Requires Zn(2+) as cofactor.

It catalyses the reaction RNA(n) + a ribonucleoside 5'-triphosphate = RNA(n+1) + diphosphate. Functionally, DNA-dependent RNA polymerase catalyzes the transcription of DNA into RNA using the four ribonucleoside triphosphates as substrates. This chain is DNA-directed RNA polymerase subunit beta', found in Acinetobacter baumannii (strain SDF).